Consider the following 163-residue polypeptide: I-Kappa-B like protein N3 (163 aa).

2 ANK repeats span residues 62-95 and 100-130; these read LGDT…NLNT and NGDT…NLQT.

Belongs to the polydnaviridae I-Kappa-B like protein family.

In terms of biological role, suppresses the host immune response through NF-kappa-B inactivation. Possesses ankyrin repeat domains required for NF-kappa-B binding but lacks the regulatory regions required for dissociation from NF-kappa-B and degradation. Therefore, prevents host NF-kappa-B release and subsequent activation. The chain is I-Kappa-B like protein N3 (N6) from Microplitis demolitor (Parasitoid wasp).